Consider the following 550-residue polypeptide: Probable importin subunit alpha-A (550 aa).

The segment covering 1-30 has biased composition (basic and acidic residues); it reads MSSRDKQDSRKKEFKKSLDSETARRKREEN. The disordered stretch occupies residues 1 to 34; sequence MSSRDKQDSRKKEFKKSLDSETARRKREENSIGI. One can recognise an IBB domain in the interval 1 to 56; the sequence is MSSRDKQDSRKKEFKKSLDSETARRKREENSIGIRKNAREELMLKRRGIVQPNPST. ARM repeat units lie at residues 116-155, 158-198, 201-241, 256-297, 300-339, 342-381, 385-424, and 428-467; these read YPPIDQVIECGIIPKLNQLLQCNNPKVQFESAWALTNIAS, NRQT…NIAG, VDSR…KIGL, KPQP…YLCD, NTKIQAVIDSGVVPRLVKLLEYPDSIVFTPALRAVGNIVT, SSQTQIVIDNNGVELITRLLAVQKKSIRKESCWALSNITA, SQIDVVVSNPKTVTTLISLLSHSEHDIKREACWALSNSTN, and TKSIQTLVRHNILKHFIDLLNSQDLVILKIVLEGLINIIK.

This sequence belongs to the importin alpha family. In terms of assembly, forms a complex with tnpo/importin subunit beta.

The protein resides in the cytoplasm. The protein localises to the nucleus envelope. Its function is as follows. Functions in nuclear protein import via a substrate-importin alpha-beta transport complex that passes though the nuclear pore complexes (NPC). Binds specifically and directly to substrates containing either a simple or bipartite NLS motif. The polypeptide is Probable importin subunit alpha-A (Dictyostelium discoideum (Social amoeba)).